Reading from the N-terminus, the 384-residue chain is Dual-specificity RNA methyltransferase RlmN (384 aa).

Catalysis depends on E105, which acts as the Proton acceptor. In terms of domain architecture, Radical SAM core spans 111 to 350; it reads EVDRATLCVS…TIVRKTRGDD (240 aa). C118 and C355 are oxidised to a cystine. Positions 125, 129, and 132 each coordinate [4Fe-4S] cluster. S-adenosyl-L-methionine-binding positions include 179 to 180, S211, 233 to 235, and N312; these read GE and SLH. The active-site S-methylcysteine intermediate is the C355.

Belongs to the radical SAM superfamily. RlmN family. The cofactor is [4Fe-4S] cluster.

Its subcellular location is the cytoplasm. It catalyses the reaction adenosine(2503) in 23S rRNA + 2 reduced [2Fe-2S]-[ferredoxin] + 2 S-adenosyl-L-methionine = 2-methyladenosine(2503) in 23S rRNA + 5'-deoxyadenosine + L-methionine + 2 oxidized [2Fe-2S]-[ferredoxin] + S-adenosyl-L-homocysteine. It carries out the reaction adenosine(37) in tRNA + 2 reduced [2Fe-2S]-[ferredoxin] + 2 S-adenosyl-L-methionine = 2-methyladenosine(37) in tRNA + 5'-deoxyadenosine + L-methionine + 2 oxidized [2Fe-2S]-[ferredoxin] + S-adenosyl-L-homocysteine. Its function is as follows. Specifically methylates position 2 of adenine 2503 in 23S rRNA and position 2 of adenine 37 in tRNAs. m2A2503 modification seems to play a crucial role in the proofreading step occurring at the peptidyl transferase center and thus would serve to optimize ribosomal fidelity. This chain is Dual-specificity RNA methyltransferase RlmN, found in Escherichia coli O9:H4 (strain HS).